A 459-amino-acid polypeptide reads, in one-letter code: Cysteine--tRNA ligase (459 aa).

A Zn(2+)-binding site is contributed by C27. A 'HIGH' region motif is present at residues 29 to 39 (VTVYDDCHIGH). The Zn(2+) site is built by C208, H233, and E237. Residues 265 to 269 (KMSKS) carry the 'KMSKS' region motif. Position 268 (K268) interacts with ATP.

It belongs to the class-I aminoacyl-tRNA synthetase family. As to quaternary structure, monomer. Zn(2+) is required as a cofactor.

The protein localises to the cytoplasm. The enzyme catalyses tRNA(Cys) + L-cysteine + ATP = L-cysteinyl-tRNA(Cys) + AMP + diphosphate. The polypeptide is Cysteine--tRNA ligase (Francisella tularensis subsp. novicida (strain U112)).